Consider the following 251-residue polypeptide: Imidazole glycerol phosphate synthase subunit HisF (251 aa).

Residues Asp-11 and Asp-130 contribute to the active site.

The protein belongs to the HisA/HisF family. As to quaternary structure, heterodimer of HisH and HisF.

Its subcellular location is the cytoplasm. It catalyses the reaction 5-[(5-phospho-1-deoxy-D-ribulos-1-ylimino)methylamino]-1-(5-phospho-beta-D-ribosyl)imidazole-4-carboxamide + L-glutamine = D-erythro-1-(imidazol-4-yl)glycerol 3-phosphate + 5-amino-1-(5-phospho-beta-D-ribosyl)imidazole-4-carboxamide + L-glutamate + H(+). Its pathway is amino-acid biosynthesis; L-histidine biosynthesis; L-histidine from 5-phospho-alpha-D-ribose 1-diphosphate: step 5/9. Its function is as follows. IGPS catalyzes the conversion of PRFAR and glutamine to IGP, AICAR and glutamate. The HisF subunit catalyzes the cyclization activity that produces IGP and AICAR from PRFAR using the ammonia provided by the HisH subunit. The sequence is that of Imidazole glycerol phosphate synthase subunit HisF from Cytophaga hutchinsonii (strain ATCC 33406 / DSM 1761 / CIP 103989 / NBRC 15051 / NCIMB 9469 / D465).